The primary structure comprises 435 residues: Cytochrome c biogenesis protein CcsB (435 aa).

Transmembrane regions (helical) follow at residues 11–31, 69–89, and 159–179; these read LRVA…GTAL, SDWF…CSWR, and VGPL…VWGV.

It belongs to the Ccs1/CcsB family. May interact with CcsA.

It localises to the plastid. The protein resides in the organellar chromatophore thylakoid membrane. Required during biogenesis of c-type cytochromes (cytochrome c6 and cytochrome f) at the step of heme attachment. This Paulinella chromatophora protein is Cytochrome c biogenesis protein CcsB.